The chain runs to 480 residues: Aspartyl/glutamyl-tRNA(Asn/Gln) amidotransferase subunit B (480 aa).

It belongs to the GatB/GatE family. GatB subfamily. Heterotrimer of A, B and C subunits.

It carries out the reaction L-glutamyl-tRNA(Gln) + L-glutamine + ATP + H2O = L-glutaminyl-tRNA(Gln) + L-glutamate + ADP + phosphate + H(+). The catalysed reaction is L-aspartyl-tRNA(Asn) + L-glutamine + ATP + H2O = L-asparaginyl-tRNA(Asn) + L-glutamate + ADP + phosphate + 2 H(+). Functionally, allows the formation of correctly charged Asn-tRNA(Asn) or Gln-tRNA(Gln) through the transamidation of misacylated Asp-tRNA(Asn) or Glu-tRNA(Gln) in organisms which lack either or both of asparaginyl-tRNA or glutaminyl-tRNA synthetases. The reaction takes place in the presence of glutamine and ATP through an activated phospho-Asp-tRNA(Asn) or phospho-Glu-tRNA(Gln). The polypeptide is Aspartyl/glutamyl-tRNA(Asn/Gln) amidotransferase subunit B (Streptococcus pneumoniae serotype 19F (strain G54)).